We begin with the raw amino-acid sequence, 70 residues long: Frenatin 4.1 (70 aa).

An N-terminal signal peptide occupies residues 1 to 22 (MAFLKKSLFLVLFLGLVNLSIC). The propeptide occupies 23 to 46 (EEEKREEENKEEEDENEALSEVKR). Lysine amide is present on Lys-68.

This sequence belongs to the frog skin active peptide (FSAP) family. Frenatin subfamily. In terms of tissue distribution, expressed by the skin glands.

The protein localises to the secreted. Its subcellular location is the target cell membrane. Functionally, peptide with unknown function. Does not show antimicrobial activity against S.aureus (MIC&gt;512 ug/mL), E.coli (MIC&gt;512 ug/mL) and C.albicans (MIC&gt;512 ug/mL). Does not show hemolytic activity. Its function is as follows. Antimicrobial peptide with activity against E.coli (MIC=128 ug/mL or 54 uM) and C.albicans (MIC=256 ug/mL or 108 uM). Does not show activity against S.aureus (MIC&gt;512 ug/mL). Does not show hemolytic activity. The chain is Frenatin 4.1 from Nyctimystes infrafrenatus (White-lipped tree frog).